The chain runs to 51 residues: Large ribosomal subunit protein eL39 (51 aa).

It belongs to the eukaryotic ribosomal protein eL39 family.

The chain is Large ribosomal subunit protein eL39 from Methanococcus aeolicus (strain ATCC BAA-1280 / DSM 17508 / OCM 812 / Nankai-3).